The chain runs to 466 residues: Ribosomal protein uS12 methylthiotransferase RimO (466 aa).

The 112-residue stretch at 16–127 folds into the MTTase N-terminal domain; the sequence is PKVAFAHLGC…IVDVLQRVEA (112 aa). Cys25, Cys61, Cys90, Cys165, Cys169, and Cys172 together coordinate [4Fe-4S] cluster. In terms of domain architecture, Radical SAM core spans 151–380; the sequence is TTDQAVAYLK…MALQQPIAAE (230 aa). A TRAM domain is found at 383-454; the sequence is QRWVGKTVDV…IYDLTGHIVG (72 aa).

The protein belongs to the methylthiotransferase family. RimO subfamily. The cofactor is [4Fe-4S] cluster.

The protein resides in the cytoplasm. It carries out the reaction L-aspartate(89)-[ribosomal protein uS12]-hydrogen + (sulfur carrier)-SH + AH2 + 2 S-adenosyl-L-methionine = 3-methylsulfanyl-L-aspartate(89)-[ribosomal protein uS12]-hydrogen + (sulfur carrier)-H + 5'-deoxyadenosine + L-methionine + A + S-adenosyl-L-homocysteine + 2 H(+). In terms of biological role, catalyzes the methylthiolation of an aspartic acid residue of ribosomal protein uS12. In Synechococcus sp. (strain CC9902), this protein is Ribosomal protein uS12 methylthiotransferase RimO.